We begin with the raw amino-acid sequence, 538 residues long: Phosphoenolpyruvate carboxykinase (ATP) (538 aa).

Residues arginine 61, tyrosine 195, and lysine 201 each contribute to the substrate site. ATP-binding positions include lysine 201, histidine 220, and 236 to 244 (GLSGTGKTT). Positions 201 and 220 each coordinate Mn(2+). Aspartate 257 contributes to the Mn(2+) binding site. Glutamate 285, arginine 323, and threonine 449 together coordinate ATP. Arginine 323 serves as a coordination point for substrate.

The protein belongs to the phosphoenolpyruvate carboxykinase (ATP) family. Mn(2+) serves as cofactor.

Its subcellular location is the cytoplasm. The enzyme catalyses oxaloacetate + ATP = phosphoenolpyruvate + ADP + CO2. It functions in the pathway carbohydrate biosynthesis; gluconeogenesis. In terms of biological role, involved in the gluconeogenesis. Catalyzes the conversion of oxaloacetate (OAA) to phosphoenolpyruvate (PEP) through direct phosphoryl transfer between the nucleoside triphosphate and OAA. The polypeptide is Phosphoenolpyruvate carboxykinase (ATP) (Nitrobacter winogradskyi (strain ATCC 25391 / DSM 10237 / CIP 104748 / NCIMB 11846 / Nb-255)).